We begin with the raw amino-acid sequence, 503 residues long: Type II secretion system ATPase E (503 aa).

Cysteine 397, cysteine 400, cysteine 430, and cysteine 433 together coordinate Zn(2+).

It belongs to the GSP E family. As to quaternary structure, forms homooligomers; most probably hexamers. Interacts with EpsL/GspL. It depends on Zn(2+) as a cofactor.

The protein localises to the cell inner membrane. The enzyme catalyses ATP + H2O + cellular proteinSide 1 = ADP + phosphate + cellular proteinSide 2.. Functionally, ATPase component of the type II secretion system required for the energy-dependent secretion of extracellular factors such as proteases and toxins from the periplasm. Acts as a molecular motor to provide the energy that is required for assembly of the pseudopilus and the extrusion of substrates generated in the cytoplasm. This Vibrio cholerae serotype O1 (strain ATCC 39315 / El Tor Inaba N16961) protein is Type II secretion system ATPase E (epsE).